The following is a 1509-amino-acid chain: Dynein axonemal assembly factor 1 homolog (1509 aa).

6 LRR repeats span residues 34–56 (RLNDTLYLHYQGFQCIEHLEEYT), 57–78 (ELKCLWLECNAISEIQGLEKLS), 79–100 (KLKCLFLQNNLITKIENLEPCR), 101–122 (ELDTLNLSSNHIRKIQNIGTNI), 125–146 (VLNTLTIASNYLKDSESLSDLV), and 150–171 (TLSVLDLSNNRIDDILIVKIFE). Positions 185–223 (PVVSRLPQYRKTLILACKELTYLDSRPVFPRDRACAEAW) constitute an LRRCT domain. Disordered stretches follow at residues 252 to 280 (CTIRIRNSHRPPDQQDPLLRSSDSEDDTC), 306 to 327 (HPTSESGASTSSSVEDNDATSS), 962 to 1008 (SGDL…DSKN), and 1103 to 1122 (TLQTSFSTVGSDEGKTKLRN). Residues 309-318 (SESGASTSSS) show a composition bias toward low complexity. The segment covering 978–990 (SESEDYDTADDEY) has biased composition (acidic residues). Residues 1103–1112 (TLQTSFSTVG) show a composition bias toward polar residues.

This sequence belongs to the DNAAF1 family.

The protein resides in the cell projection. It localises to the cilium. Functionally, cilium-specific protein required for cilia structures. The chain is Dynein axonemal assembly factor 1 homolog (dtr) from Drosophila yakuba (Fruit fly).